Reading from the N-terminus, the 73-residue chain is Gas vesicle protein A (73 aa).

Belongs to the gas vesicle GvpA family. The gas vesicle shell is 2 nm thick and consists of a single layer of this protein. It forms helical ribs nearly perpendicular to the long axis of the vesicle.

The protein resides in the gas vesicle shell. Gas vesicles are hollow, gas filled proteinaceous nanostructures found in some microorganisms. During planktonic growth they allow positioning of the organism at a favorable depth for light or nutrient acquisition. GvpA forms the protein shell. This is Gas vesicle protein A from Nostoc punctiforme (strain ATCC 29133 / PCC 73102).